Reading from the N-terminus, the 153-residue chain is Large ribosomal subunit protein uL22 (153 aa).

Belongs to the universal ribosomal protein uL22 family. In terms of assembly, part of the 50S ribosomal subunit.

Functionally, this protein binds specifically to 23S rRNA. It makes multiple contacts with different domains of the 23S rRNA in the assembled 50S subunit and ribosome. Its function is as follows. The globular domain of the protein is located near the polypeptide exit tunnel on the outside of the subunit, while an extended beta-hairpin is found that lines the wall of the exit tunnel in the center of the 70S ribosome. The chain is Large ribosomal subunit protein uL22 from Methanocella arvoryzae (strain DSM 22066 / NBRC 105507 / MRE50).